Here is a 398-residue protein sequence, read N- to C-terminus: Succinate--CoA ligase [ADP-forming] subunit beta (398 aa).

The ATP-grasp domain maps to Lys9–Glu254. Residues Lys46, Gly53–Gly55, Glu109, Ser112, and Glu117 each bind ATP. Residues Asn209 and Asp223 each coordinate Mg(2+). Substrate contacts are provided by residues Asn274 and Gly331–Met333.

Belongs to the succinate/malate CoA ligase beta subunit family. In terms of assembly, heterotetramer of two alpha and two beta subunits. Mg(2+) is required as a cofactor.

The catalysed reaction is succinate + ATP + CoA = succinyl-CoA + ADP + phosphate. It carries out the reaction GTP + succinate + CoA = succinyl-CoA + GDP + phosphate. Its pathway is carbohydrate metabolism; tricarboxylic acid cycle; succinate from succinyl-CoA (ligase route): step 1/1. Its function is as follows. Succinyl-CoA synthetase functions in the citric acid cycle (TCA), coupling the hydrolysis of succinyl-CoA to the synthesis of either ATP or GTP and thus represents the only step of substrate-level phosphorylation in the TCA. The beta subunit provides nucleotide specificity of the enzyme and binds the substrate succinate, while the binding sites for coenzyme A and phosphate are found in the alpha subunit. This is Succinate--CoA ligase [ADP-forming] subunit beta from Bradyrhizobium sp. (strain BTAi1 / ATCC BAA-1182).